The chain runs to 317 residues: Ribonuclease Z (317 aa).

7 residues coordinate Zn(2+): His-63, His-65, Asp-67, His-68, His-143, Asp-214, and His-272. Asp-67 acts as the Proton acceptor in catalysis.

The protein belongs to the RNase Z family. As to quaternary structure, homodimer. Zn(2+) is required as a cofactor.

It carries out the reaction Endonucleolytic cleavage of RNA, removing extra 3' nucleotides from tRNA precursor, generating 3' termini of tRNAs. A 3'-hydroxy group is left at the tRNA terminus and a 5'-phosphoryl group is left at the trailer molecule.. Its function is as follows. Zinc phosphodiesterase, which displays some tRNA 3'-processing endonuclease activity. Probably involved in tRNA maturation, by removing a 3'-trailer from precursor tRNA. This chain is Ribonuclease Z, found in Ligilactobacillus salivarius (strain UCC118) (Lactobacillus salivarius).